The sequence spans 589 residues: Proline--tRNA ligase (589 aa).

This sequence belongs to the class-II aminoacyl-tRNA synthetase family. ProS type 1 subfamily. Homodimer.

It is found in the cytoplasm. It catalyses the reaction tRNA(Pro) + L-proline + ATP = L-prolyl-tRNA(Pro) + AMP + diphosphate. In terms of biological role, catalyzes the attachment of proline to tRNA(Pro) in a two-step reaction: proline is first activated by ATP to form Pro-AMP and then transferred to the acceptor end of tRNA(Pro). As ProRS can inadvertently accommodate and process non-cognate amino acids such as alanine and cysteine, to avoid such errors it has two additional distinct editing activities against alanine. One activity is designated as 'pretransfer' editing and involves the tRNA(Pro)-independent hydrolysis of activated Ala-AMP. The other activity is designated 'posttransfer' editing and involves deacylation of mischarged Ala-tRNA(Pro). The misacylated Cys-tRNA(Pro) is not edited by ProRS. The polypeptide is Proline--tRNA ligase (Nocardioides sp. (strain ATCC BAA-499 / JS614)).